The chain runs to 151 residues: Small ribosomal subunit protein bS6 (151 aa).

A disordered region spans residues 96 to 151 (HEEGQSAMLTRRDDRRERDGDDRPRRREGGFDRGDRGDRGDRGPRRPRDNEAGEGA).

The protein belongs to the bacterial ribosomal protein bS6 family.

Its function is as follows. Binds together with bS18 to 16S ribosomal RNA. In Brucella anthropi (strain ATCC 49188 / DSM 6882 / CCUG 24695 / JCM 21032 / LMG 3331 / NBRC 15819 / NCTC 12168 / Alc 37) (Ochrobactrum anthropi), this protein is Small ribosomal subunit protein bS6.